We begin with the raw amino-acid sequence, 319 residues long: ATP-dependent 6-phosphofructokinase (319 aa).

Residue Gly-11 participates in ATP binding. An ADP-binding site is contributed by 21–25 (RAVVR). ATP is bound by residues 72 to 73 (RC) and 102 to 105 (GDGS). Asp-103 provides a ligand contact to Mg(2+). 125 to 127 (TID) is a binding site for substrate. Asp-127 serves as the catalytic Proton acceptor. An ADP-binding site is contributed by Arg-154. Residues Arg-162 and 169-171 (MGR) contribute to the substrate site. Residues 185-187 (GAE), Arg-211, and 213-215 (KKH) contribute to the ADP site. Substrate-binding positions include Glu-222, Arg-243, and 249-252 (HMQR).

The protein belongs to the phosphofructokinase type A (PFKA) family. ATP-dependent PFK group I subfamily. Prokaryotic clade 'B1' sub-subfamily. In terms of assembly, homotetramer. It depends on Mg(2+) as a cofactor.

The protein resides in the cytoplasm. It carries out the reaction beta-D-fructose 6-phosphate + ATP = beta-D-fructose 1,6-bisphosphate + ADP + H(+). The protein operates within carbohydrate degradation; glycolysis; D-glyceraldehyde 3-phosphate and glycerone phosphate from D-glucose: step 3/4. Its activity is regulated as follows. Allosterically activated by ADP and other diphosphonucleosides, and allosterically inhibited by phosphoenolpyruvate. Its function is as follows. Catalyzes the phosphorylation of D-fructose 6-phosphate to fructose 1,6-bisphosphate by ATP, the first committing step of glycolysis. This is ATP-dependent 6-phosphofructokinase from Macrococcus caseolyticus (strain JCSC5402) (Macrococcoides caseolyticum).